The sequence spans 998 residues: Protein Smaug (998 aa).

Residues 1-37 (MKYATGTDNAMTSGISGQTNSSNSASNEMQPTTSTPT) are compositionally biased toward polar residues. Disordered regions lie at residues 1–45 (MKYA…EATS), 50–69 (TATY…QSQP), and 329–370 (LCPA…GSSS). The span at 329–338 (LCPASGSRSS) shows a compositional bias: low complexity. Residues serine 564 and serine 575 each carry the phosphoserine modification. Positions 583–763 (EFKPNYIKFH…KDLKFKLSKM (181 aa)) are interaction with cup. Residues 600-654 (GIGLWLKSLRLHKYIELFKNMTYEEMLLITEDFLQSVGVTKGASHKLALCIDKLK) form the SAM domain. Disordered regions lie at residues 773 to 892 (HVKP…MQQM) and 943 to 977 (NGSN…QQPK). Polar residues-rich tracts occupy residues 801–822 (KSGS…NFSL) and 854–864 (HQPQYKSSSYP). Phosphoserine is present on serine 971.

This sequence belongs to the SMAUG family. As to quaternary structure, interacts with oskar (osk). Binds to the 3'-UTR of nos. Interacts with cup, which in turn recruits eIF4-E, leading to an indirect interaction between smg and eIF4-E that prevents mRNA translation.

It localises to the cytoplasm. Its function is as follows. Translation regulator that binds to the 3'-UTR of specific mRNAs such as nanos (nos) and prevent their translation. Prevents translation of unlocalized nos in the bulk cytoplasm via the recruitment of cup. This chain is Protein Smaug, found in Drosophila sechellia (Fruit fly).